We begin with the raw amino-acid sequence, 229 residues long: 23 kDa piroplasm membrane protein (229 aa).

Residues 1–19 form the signal peptide; sequence MNKYFKVFFFVLLTHALKS. At 20 to 203 the chain is on the extracellular side; it reads ALIFGQATLQ…EKEDTNKKKY (184 aa). A helical transmembrane segment spans residues 204–224; the sequence is VLMVVVVVVFVVVASLVVFLV. Over 225 to 229 the chain is Cytoplasmic; that stretch reads KFCLK.

It localises to the membrane. The sequence is that of 23 kDa piroplasm membrane protein from Theileria parva (East coast fever infection agent).